The primary structure comprises 165 residues: Probable chemoreceptor glutamine deamidase CheD (165 aa).

Belongs to the CheD family.

The catalysed reaction is L-glutaminyl-[protein] + H2O = L-glutamyl-[protein] + NH4(+). In terms of biological role, probably deamidates glutamine residues to glutamate on methyl-accepting chemotaxis receptors (MCPs), playing an important role in chemotaxis. In Clostridium tetani (strain Massachusetts / E88), this protein is Probable chemoreceptor glutamine deamidase CheD.